The primary structure comprises 70 residues: MGKVTGISGRFGARYGSTLRKKWKEIMEKRYDEHQCPYCKTTGKVIRLASGIWYCKKCNSKWAGLAYTPY.

Zn(2+)-binding residues include Cys-36, Cys-39, Cys-55, and Cys-58. Residues 36–58 (CPYCKTTGKVIRLASGIWYCKKC) form a C4-type zinc finger.

The protein belongs to the eukaryotic ribosomal protein eL43 family. Putative zinc-binding subfamily. As to quaternary structure, part of the 50S ribosomal subunit. Zn(2+) serves as cofactor.

Binds to the 23S rRNA. This Saccharolobus solfataricus (strain ATCC 35092 / DSM 1617 / JCM 11322 / P2) (Sulfolobus solfataricus) protein is Large ribosomal subunit protein eL43.